The primary structure comprises 267 residues: MEMO1 family protein aq_890 (267 aa).

It belongs to the MEMO1 family.

The polypeptide is MEMO1 family protein aq_890 (Aquifex aeolicus (strain VF5)).